The sequence spans 620 residues: Cell fusion protein cfr1 (620 aa).

Positions 79 to 169 (LPSPPVLKLK…KHITIKTLRM (91 aa)) constitute a Fibronectin type-III domain. The region spanning 167–256 (LRMIDLTGIQ…RLVNVSGFYI (90 aa)) is the BRCT domain. 2 disordered regions span residues 287–566 (QPKN…PEKA) and 588–620 (KQSS…VNID). Residues 303-314 (APQQTTQQGTQN) show a composition bias toward polar residues. A compositionally biased stretch (low complexity) spans 315–330 (SANAEPSSSASVPAEA). Residues 352–375 (SKPNEAPTSSENIKADQPENSTKQ) show a composition bias toward polar residues. The span at 382–392 (MQIKDAEEHSN) shows a compositional bias: basic and acidic residues. Residues 393–406 (LESTPAAQQTSEVE) are compositionally biased toward polar residues. Residues 424–434 (NVNEENNTPET) show a composition bias toward low complexity. Over residues 445–468 (NTAAESLINQEETTSGEAVTKSTV) the composition is skewed to polar residues. Residues 472-484 (ANEEEAEPNEIIE) are compositionally biased toward acidic residues. Positions 506–515 (NNANSENANG) are enriched in polar residues. Positions 517–537 (TDEKIIEAPLDTKENSDDDKP) are enriched in basic and acidic residues.

It belongs to the CHS5 family.

It is found in the golgi apparatus. In terms of biological role, required for cell fusion, independently of fus1. Appears to have a role in transporting proteins that are involved in mating. May act as a scaffold to retain cell fusion proteins in the cisternae of the Golgi. Degraded at the onset of mating and this leads to release of cell fusion proteins. The sequence is that of Cell fusion protein cfr1 (cfr1) from Schizosaccharomyces pombe (strain 972 / ATCC 24843) (Fission yeast).